The chain runs to 233 residues: Large ribosomal subunit protein uL1 (233 aa).

It belongs to the universal ribosomal protein uL1 family. Part of the 50S ribosomal subunit.

Its function is as follows. Binds directly to 23S rRNA. The L1 stalk is quite mobile in the ribosome, and is involved in E site tRNA release. Protein L1 is also a translational repressor protein, it controls the translation of the L11 operon by binding to its mRNA. This is Large ribosomal subunit protein uL1 from Hamiltonella defensa subsp. Acyrthosiphon pisum (strain 5AT).